Consider the following 222-residue polypeptide: N-(5'-phosphoribosyl)anthranilate isomerase (222 aa).

Belongs to the TrpF family.

The catalysed reaction is N-(5-phospho-beta-D-ribosyl)anthranilate = 1-(2-carboxyphenylamino)-1-deoxy-D-ribulose 5-phosphate. Its pathway is amino-acid biosynthesis; L-tryptophan biosynthesis; L-tryptophan from chorismate: step 3/5. This is N-(5'-phosphoribosyl)anthranilate isomerase from Beijerinckia indica subsp. indica (strain ATCC 9039 / DSM 1715 / NCIMB 8712).